A 425-amino-acid polypeptide reads, in one-letter code: Serine--tRNA ligase (425 aa).

232-234 (TSE) contacts L-serine. Residues 263-265 (RRE) and Val279 contribute to the ATP site. Residue Glu286 coordinates L-serine. 350–353 (EVVS) serves as a coordination point for ATP. Thr387 is a binding site for L-serine.

Belongs to the class-II aminoacyl-tRNA synthetase family. Type-1 seryl-tRNA synthetase subfamily. As to quaternary structure, homodimer. The tRNA molecule binds across the dimer.

Its subcellular location is the cytoplasm. The enzyme catalyses tRNA(Ser) + L-serine + ATP = L-seryl-tRNA(Ser) + AMP + diphosphate + H(+). It carries out the reaction tRNA(Sec) + L-serine + ATP = L-seryl-tRNA(Sec) + AMP + diphosphate + H(+). Its pathway is aminoacyl-tRNA biosynthesis; selenocysteinyl-tRNA(Sec) biosynthesis; L-seryl-tRNA(Sec) from L-serine and tRNA(Sec): step 1/1. In terms of biological role, catalyzes the attachment of serine to tRNA(Ser). Is also able to aminoacylate tRNA(Sec) with serine, to form the misacylated tRNA L-seryl-tRNA(Sec), which will be further converted into selenocysteinyl-tRNA(Sec). This chain is Serine--tRNA ligase, found in Methanocella arvoryzae (strain DSM 22066 / NBRC 105507 / MRE50).